The chain runs to 420 residues: Phosphoribosylamine--glycine ligase (420 aa).

Residues Lys108–His314 form the ATP-grasp domain. Leu134 to Ser195 contributes to the ATP binding site. Residues Glu284 and Asn286 each contribute to the Mg(2+) site.

This sequence belongs to the GARS family. The cofactor is Mg(2+). Requires Mn(2+) as cofactor.

The catalysed reaction is 5-phospho-beta-D-ribosylamine + glycine + ATP = N(1)-(5-phospho-beta-D-ribosyl)glycinamide + ADP + phosphate + H(+). It participates in purine metabolism; IMP biosynthesis via de novo pathway; N(1)-(5-phospho-D-ribosyl)glycinamide from 5-phospho-alpha-D-ribose 1-diphosphate: step 2/2. In Listeria monocytogenes serovar 1/2a (strain ATCC BAA-679 / EGD-e), this protein is Phosphoribosylamine--glycine ligase.